Reading from the N-terminus, the 269-residue chain is Thiazole synthase (269 aa).

The active-site Schiff-base intermediate with DXP is lysine 95. Residues glycine 156, 182–183 (AG), and 204–205 (NT) each bind 1-deoxy-D-xylulose 5-phosphate.

The protein belongs to the ThiG family. In terms of assembly, homotetramer. Forms heterodimers with either ThiH or ThiS.

It is found in the cytoplasm. It carries out the reaction [ThiS sulfur-carrier protein]-C-terminal-Gly-aminoethanethioate + 2-iminoacetate + 1-deoxy-D-xylulose 5-phosphate = [ThiS sulfur-carrier protein]-C-terminal Gly-Gly + 2-[(2R,5Z)-2-carboxy-4-methylthiazol-5(2H)-ylidene]ethyl phosphate + 2 H2O + H(+). It functions in the pathway cofactor biosynthesis; thiamine diphosphate biosynthesis. Catalyzes the rearrangement of 1-deoxy-D-xylulose 5-phosphate (DXP) to produce the thiazole phosphate moiety of thiamine. Sulfur is provided by the thiocarboxylate moiety of the carrier protein ThiS. In vitro, sulfur can be provided by H(2)S. The sequence is that of Thiazole synthase from Shewanella frigidimarina (strain NCIMB 400).